The sequence spans 82 residues: Penaeidin-3g (82 aa).

An N-terminal signal peptide occupies residues 1–19 (MRLVVCLVFLASFALVCQG). The residue at position 20 (Q20) is a Pyrrolidone carboxylic acid. Cystine bridges form between C51/C66, C55/C73, and C67/C74. S81 carries the serine amide modification.

This sequence belongs to the penaeidin family.

The protein localises to the cytoplasmic granule. Antibacterial and antifungal activity. Presents chitin-binding activity. The protein is Penaeidin-3g of Penaeus vannamei (Whiteleg shrimp).